The chain runs to 90 residues: Leech factor Xa inhibitor (90 aa).

The protein resides in the secreted. Potent anticoagulant inhibiting the amidolytic activity of factor Xa (F10) (Ki=4nM) and reducing its ability to activate prothrombin (F2) in the prothrombinase complex (EC(50)=40nM). The chain is Leech factor Xa inhibitor from Haementeria depressa (Leech).